The primary structure comprises 334 residues: Aromatic O-demethylase, reductase subunit (334 aa).

The 91-residue stretch at 1 to 91 (MTFAVSVGGR…DTEVRSTADA (91 aa)) folds into the 2Fe-2S ferredoxin-type domain. Residues Cys-35, Cys-40, Cys-43, and Cys-75 each contribute to the [2Fe-2S] cluster site. Positions 98 to 198 (LRDLTATVLE…TGPLGDFHLP (101 aa)) constitute an FAD-binding FR-type domain. FAD is bound by residues 145–148 (RQYS), 162–164 (HVR), 170–172 (VAT), Thr-215, Phe-330, and Ser-334.

In terms of assembly, monomer. Forms a heterodimer with GcoA. FAD is required as a cofactor. [2Fe-2S] cluster serves as cofactor.

It catalyses the reaction 2 oxidized [cytochrome P450] + NADH = 2 reduced [cytochrome P450] + NAD(+) + H(+). Its pathway is aromatic compound metabolism. Functionally, part of a two-component P450 system that efficiently O-demethylates diverse aromatic substrates such as guaiacol and a wide variety of lignin-derived monomers. Is likely involved in lignin degradation, allowing Amycolatopsis sp. ATCC 39116 to catabolize plant biomass. GcoB transfers electrons from NADH to the cytochrome P450 subunit GcoA. Highly prefers NADH over NADPH as the electron donor. The protein is Aromatic O-demethylase, reductase subunit of Amycolatopsis sp. (strain ATCC 39116 / 75iv2).